A 1959-amino-acid polypeptide reads, in one-letter code: Zinc finger protein hangover (1959 aa).

A ZAD domain is found at asparagine 79 to tryptophan 155. Cysteine 81, cysteine 84, cysteine 128, and cysteine 131 together coordinate Zn(2+). The segment at glycine 178–threonine 208 is disordered. The segment covering glutamine 192–alanine 205 has biased composition (basic and acidic residues). The residue at position 228 (serine 228) is a Phosphoserine. Threonine 246 carries the post-translational modification Phosphothreonine. The C2H2-type 1 zinc finger occupies alanine 318–histidine 341. The C2H2-type 2; degenerate zinc-finger motif lies at methionine 447–lysine 469. Residues tyrosine 581–histidine 604 form a C2H2-type 3 zinc finger. Positions alanine 674–serine 762 are disordered. Residues aspartate 677–glutamate 693 show a composition bias toward polar residues. Serine 680 carries the phosphoserine modification. 2 stretches are compositionally biased toward low complexity: residues serine 716 to proline 727 and threonine 741 to alanine 759. 2 consecutive C2H2-type zinc fingers follow at residues glutamine 770–histidine 793 and tyrosine 801–histidine 824. Serine 832, serine 894, serine 895, serine 898, and serine 899 each carry phosphoserine. Residues lysine 908–histidine 930 form a C2H2-type 6 zinc finger. The tract at residues threonine 960 to glutamine 991 is disordered. C2H2-type zinc fingers lie at residues methionine 1011–histidine 1034, isoleucine 1042–histidine 1065, phenylalanine 1078–histidine 1101, tyrosine 1154–histidine 1176, and tyrosine 1184–histidine 1207. Residues threonine 1233–glutamine 1253 show a composition bias toward polar residues. The interval threonine 1233 to serine 1301 is disordered. Over residues histidine 1255–histidine 1267 the composition is skewed to basic residues. Positions aspartate 1271–glutamine 1283 are enriched in acidic residues. 2 consecutive C2H2-type zinc fingers follow at residues valine 1318–histidine 1340 and tyrosine 1375–histidine 1397. The span at glutamine 1445–serine 1467 shows a compositional bias: low complexity. Residues glutamine 1445 to lysine 1471 are disordered. C2H2-type zinc fingers lie at residues leucine 1476–histidine 1499 and tryptophan 1552–histidine 1574. Residues alanine 1627–valine 1865 form a disordered region. The segment covering proline 1639–glycine 1695 has biased composition (acidic residues). The segment covering glutamine 1697–asparagine 1715 has biased composition (low complexity). Acidic residues-rich tracts occupy residues glutamine 1716–glutamate 1758 and serine 1782–proline 1829. Low complexity predominate over residues serine 1833–histidine 1851. The C2H2-type 16 zinc-finger motif lies at phenylalanine 1873–histidine 1895. Residues proline 1933–asparagine 1959 are disordered. Residues asparagine 1942 to threonine 1952 are compositionally biased toward low complexity.

In terms of tissue distribution, expressed ubiquitously in the nervous system, in neurons not glia.

Its subcellular location is the nucleus. Functionally, required for normal development of ethanol tolerance. Relies on two distinct molecular pathways: a cellular stress pathway defined by hang, and a parallel pathway requiring octopamine. In Drosophila melanogaster (Fruit fly), this protein is Zinc finger protein hangover (hang).